Reading from the N-terminus, the 803-residue chain is MSFQQPSNGAQGGNNNALEKTSSNEATSSSSTQVSSLSASGISVSTPRVSPFEPERNMQVQSSQHLEANVQSPVSSQTTYATPSAYAVPQESEIELHESEMVPQKPKKKKRSRRNRKASRKKIPATQSSSADMDTLHVCPTCGSCSDSKKPQSNKKHRGRRVKHSPKSTLEVPDGIPDIKALSASMGSSSQHASRYNEGRGSFDTLGTHYHLSKSRKSSSSDSLYSVSSMSIKNDSNSDSLSSSSSSDVSGSDENLPIDKTLYLSVEDPSFMVHPRRPSATKSCSAAVDCPHTTIPKPPYQSDTDLTELPTKSTAQFSDETFTVQPRLKSTHSSIADNEDREVDSQVDENTRVVEEDVCFPMQEESHVNKGIDFDELDNFAEEELQKQRQNTDHFRSRQYSTCKPFEPHWNDLSPHDPNDPSSSLHSNNAEKAAEVPLRSSYYSGGRRSVTSMSDSPYRFSFFSSNQNETIHASVLSDLLDDGATSFRSLFCPEKGVWWLDCLDPTDIEMRVLSKAFSIHPLTTEDIRVQEAREKVELFGSYYFVCFRSFEQDPELANYLEPLNMYIVVFREGLLTFHFSSATHPASVRRRARQLRDYVHVSSDWLCYALIDDITDAFVPLIRGIETETEAIEDSVLVGRSEDSSDMLRRIGECRKKTMGMFRLLYGKADVIKMLAKRCNEKWTIAPTGEIGLYLGDIQDHLVTMTSNLSQFEKILSRTHSNYLAQLTSNSIEENSRTNGALGKITLIGTLLVPMNLVTGLFGMNVPVPGRDTNNLAWFFGILGVLLGSIAIGWIITMRYNAF.

Residues 1–20 (MSFQQPSNGAQGGNNNALEK) are compositionally biased toward polar residues. The disordered stretch occupies residues 1-255 (MSFQQPSNGA…SSDVSGSDEN (255 aa)). Residues 21 to 45 (TSSNEATSSSSTQVSSLSASGISVS) show a composition bias toward low complexity. Residues 58–82 (MQVQSSQHLEANVQSPVSSQTTYAT) are compositionally biased toward polar residues. Composition is skewed to basic residues over residues 105–123 (KPKKKKRSRRNRKASRKKI) and 152–166 (QSNKKHRGRRVKHSP). Low complexity-rich tracts occupy residues 181-194 (ALSASMGSSSQHAS) and 218-253 (SSSSDSLYSVSSMSIKNDSNSDSLSSSSSSDVSGSD). The residue at position 318 (Ser318) is a Phosphoserine. Disordered regions lie at residues 326–349 (PRLKSTHSSIADNEDREVDSQVDE) and 406–431 (FEPHWNDLSPHDPNDPSSSLHSNNAE). Residues 337 to 347 (DNEDREVDSQV) are compositionally biased toward acidic residues. Positions 406–419 (FEPHWNDLSPHDPN) are enriched in basic and acidic residues. The span at 420–430 (DPSSSLHSNNA) shows a compositional bias: polar residues. A phosphoserine mark is found at Ser449 and Ser452. Transmembrane regions (helical) follow at residues 745–765 (ITLIGTLLVPMNLVTGLFGMN) and 776–796 (LAWFFGILGVLLGSIAIGWII).

Belongs to the CorA metal ion transporter (MIT) (TC 1.A.35) family.

It localises to the cytoplasm. The protein resides in the membrane. The protein is Putative metal ion transporter C27B12.12c of Schizosaccharomyces pombe (strain 972 / ATCC 24843) (Fission yeast).